The sequence spans 247 residues: Protein lin-28 homolog B (247 aa).

The interval 1–22 (MAEGGASKGEEPEKLPGLAEDE) is disordered. The 74-residue stretch at 27 to 100 (HGTGHCKWFN…GLESIRVTGP (74 aa)) folds into the CSD domain. S94, S103, and S108 each carry phosphoserine. Residues 96–124 (RVTGPGGSPCLGSERRPKGKTLQKRKPKG) are disordered. A compositionally biased stretch (basic residues) spans 112–123 (PKGKTLQKRKPK). CCHC-type zinc fingers lie at residues 125-142 (DRCY…ECSL) and 147-164 (KKCH…NCPH). Zn(2+) contacts are provided by C127, C130, H135, C140, C149, C152, H157, and C162. Residues 173–186 (SSQGRQEAESQPCS) are compositionally biased toward polar residues. Positions 173–247 (SSQGRQEAES…GPLIQKRKKT (75 aa)) are disordered. Over residues 207–219 (VKSEMAEHSDRSP) the composition is skewed to basic and acidic residues.

This sequence belongs to the lin-28 family.

Its subcellular location is the nucleus. The protein resides in the nucleolus. In terms of biological role, suppressor of microRNA (miRNA) biogenesis, including that of let-7 and possibly of miR107, miR-143 and miR-200c. Binds primary let-7 transcripts (pri-let-7), including pri-let-7g and pri-let-7a-1, and sequester them in the nucleolus, away from the microprocessor complex, hence preventing their processing into mature miRNA. Does not act on pri-miR21. The repression of let-7 expression is required for normal development and contributes to maintain the pluripotent state of embryonic stem cells by preventing let-7-mediated differentiation. When overexpressed, recruits ZCCHC11/TUT4 uridylyltransferase to pre-let-7 transcripts, leading to their terminal uridylation and degradation. This activity might not be relevant in vivo, as LIN28B-mediated inhibition of let-7 miRNA maturation appears to be ZCCHC11-independent. Interaction with target pre-miRNAs occurs via an 5'-GGAG-3' motif in the pre-miRNA terminal loop. Mediates MYC-induced let-7 repression. When overexpressed, may stimulate growth of carcinoma cell lines. The sequence is that of Protein lin-28 homolog B (Lin28b) from Mus musculus (Mouse).